A 114-amino-acid polypeptide reads, in one-letter code: Large ribosomal subunit protein uL24 (114 aa).

The protein belongs to the universal ribosomal protein uL24 family. Part of the 50S ribosomal subunit.

Functionally, one of two assembly initiator proteins, it binds directly to the 5'-end of the 23S rRNA, where it nucleates assembly of the 50S subunit. In terms of biological role, one of the proteins that surrounds the polypeptide exit tunnel on the outside of the subunit. This is Large ribosomal subunit protein uL24 from Acidothermus cellulolyticus (strain ATCC 43068 / DSM 8971 / 11B).